A 155-amino-acid polypeptide reads, in one-letter code: Transcriptional repressor NrdR (155 aa).

The segment at 3–34 (CPFCNQTDTKVIDSRLVADGVQVRRRRECQAC) is a zinc-finger region. One can recognise an ATP-cone domain in the interval 49 to 139 (PKVIKQDGTR…VYRSFQDISE (91 aa)).

The protein belongs to the NrdR family. The cofactor is Zn(2+).

In terms of biological role, negatively regulates transcription of bacterial ribonucleotide reductase nrd genes and operons by binding to NrdR-boxes. This chain is Transcriptional repressor NrdR, found in Teredinibacter turnerae (strain ATCC 39867 / T7901).